Consider the following 319-residue polypeptide: Thioredoxin reductase (319 aa).

36–48 (EGFMAGGVAAGGQ) contributes to the FAD binding site. A disulfide bond links C144 and C147. An FAD-binding site is contributed by 289-298 (DVQDKVYRQA).

The protein belongs to the class-II pyridine nucleotide-disulfide oxidoreductase family. In terms of assembly, homodimer. The cofactor is FAD.

The catalysed reaction is [thioredoxin]-dithiol + NADP(+) = [thioredoxin]-disulfide + NADPH + H(+). The polypeptide is Thioredoxin reductase (trrA) (Dictyostelium discoideum (Social amoeba)).